The primary structure comprises 246 residues: Protein lin-37 homolog (246 aa).

An N-acetylmethionine modification is found at Met-1. Glycyl lysine isopeptide (Lys-Gly) (interchain with G-Cter in SUMO2) cross-links involve residues Lys-5 and Lys-7. Over residues 39–55 (RLDEEAGKTPLDTHNKD) the composition is skewed to basic and acidic residues. Disordered stretches follow at residues 39–90 (RLDE…GGPQ) and 129–208 (VRER…TLIY). 2 positions are modified to phosphoserine: Ser-135 and Ser-138. A Phosphothreonine modification is found at Thr-167. Ser-182 and Ser-202 each carry phosphoserine.

In terms of assembly, component of the DREAM complex (also named LINC complex) at least composed of E2F4, E2F5, LIN9, LIN37, LIN52, LIN54, MYBL1, MYBL2, RBL1, RBL2, RBBP4, TFDP1 and TFDP2. The complex exists in quiescent cells where it represses cell cycle-dependent genes. It dissociates in S phase when LIN9, LIN37, LIN52 and LIN54 form a subcomplex that binds to MYBL2.

This Mus musculus (Mouse) protein is Protein lin-37 homolog (Lin37).